The primary structure comprises 346 residues: MSEAARLIAPEKRGEDVDATLRPQTLDEFTGQAEARANLKIFIEAARNRGEALDHVLFVGPPGLGKTTLAQIMAKELGVNFRSTSGPVIAKAGDLAALLTNLEERDVLFIDEIHRLNPAVEEILYPAMEDFQLDLIIGEGPSARSVKIDLAKFTLVAATTRLGLLTTPLRDRFGIPVRLNFYTVEELELIVRRGARLMGLGMTDEGAREIARRARGTPRIAGRLLRRVRDFAEVARAEAVTRQIADEALTRLLVDSMGLDQLDRRYLTMIAQNFGGGPVGIETIAAGLSEPRDAIEDIIEPYLIQQGFIQRTPRGRVLTANAWKHLGLNPPKDVEASQFRLTLEDD.

The segment at 1 to 182 (MSEAARLIAP…FGIPVRLNFY (182 aa)) is large ATPase domain (RuvB-L). ATP is bound by residues L21, R22, G63, K66, T67, T68, 129–131 (EDF), R172, Y182, and R219. A Mg(2+)-binding site is contributed by T67. Residues 183 to 253 (TVEELELIVR…IADEALTRLL (71 aa)) are small ATPAse domain (RuvB-S). The segment at 256–346 (SMGLDQLDRR…SQFRLTLEDD (91 aa)) is head domain (RuvB-H). DNA contacts are provided by R292, R311, and R316.

This sequence belongs to the RuvB family. As to quaternary structure, homohexamer. Forms an RuvA(8)-RuvB(12)-Holliday junction (HJ) complex. HJ DNA is sandwiched between 2 RuvA tetramers; dsDNA enters through RuvA and exits via RuvB. An RuvB hexamer assembles on each DNA strand where it exits the tetramer. Each RuvB hexamer is contacted by two RuvA subunits (via domain III) on 2 adjacent RuvB subunits; this complex drives branch migration. In the full resolvosome a probable DNA-RuvA(4)-RuvB(12)-RuvC(2) complex forms which resolves the HJ.

It is found in the cytoplasm. It catalyses the reaction ATP + H2O = ADP + phosphate + H(+). Functionally, the RuvA-RuvB-RuvC complex processes Holliday junction (HJ) DNA during genetic recombination and DNA repair, while the RuvA-RuvB complex plays an important role in the rescue of blocked DNA replication forks via replication fork reversal (RFR). RuvA specifically binds to HJ cruciform DNA, conferring on it an open structure. The RuvB hexamer acts as an ATP-dependent pump, pulling dsDNA into and through the RuvAB complex. RuvB forms 2 homohexamers on either side of HJ DNA bound by 1 or 2 RuvA tetramers; 4 subunits per hexamer contact DNA at a time. Coordinated motions by a converter formed by DNA-disengaged RuvB subunits stimulates ATP hydrolysis and nucleotide exchange. Immobilization of the converter enables RuvB to convert the ATP-contained energy into a lever motion, pulling 2 nucleotides of DNA out of the RuvA tetramer per ATP hydrolyzed, thus driving DNA branch migration. The RuvB motors rotate together with the DNA substrate, which together with the progressing nucleotide cycle form the mechanistic basis for DNA recombination by continuous HJ branch migration. Branch migration allows RuvC to scan DNA until it finds its consensus sequence, where it cleaves and resolves cruciform DNA. This is Holliday junction branch migration complex subunit RuvB from Sinorhizobium medicae (strain WSM419) (Ensifer medicae).